The chain runs to 383 residues: Gamma-butyrobetaine dioxygenase (383 aa).

Positions 46, 48, 51, and 91 each coordinate Zn(2+). Residues H209, D211, and H350 each coordinate Fe cation.

This sequence belongs to the gamma-BBH/TMLD family. In terms of assembly, homodimer. Requires Fe(2+) as cofactor. The cofactor is L-ascorbate.

The protein localises to the cytoplasm. It catalyses the reaction 4-(trimethylamino)butanoate + 2-oxoglutarate + O2 = carnitine + succinate + CO2. The protein operates within amine and polyamine biosynthesis; carnitine biosynthesis. Its function is as follows. Catalyzes the formation of L-carnitine from gamma-butyrobetaine. The protein is Gamma-butyrobetaine dioxygenase of Pseudomonas sp. (strain AK-1).